The sequence spans 346 residues: Methylthioribose-1-phosphate isomerase (346 aa).

Substrate contacts are provided by residues 46–48 (RGA), R89, and Q196. The Proton donor role is filled by D237. A substrate-binding site is contributed by 247–248 (NK).

It belongs to the eIF-2B alpha/beta/delta subunits family. MtnA subfamily.

It carries out the reaction 5-(methylsulfanyl)-alpha-D-ribose 1-phosphate = 5-(methylsulfanyl)-D-ribulose 1-phosphate. The protein operates within amino-acid biosynthesis; L-methionine biosynthesis via salvage pathway; L-methionine from S-methyl-5-thio-alpha-D-ribose 1-phosphate: step 1/6. Functionally, catalyzes the interconversion of methylthioribose-1-phosphate (MTR-1-P) into methylthioribulose-1-phosphate (MTRu-1-P). The sequence is that of Methylthioribose-1-phosphate isomerase from Citrifermentans bemidjiense (strain ATCC BAA-1014 / DSM 16622 / JCM 12645 / Bem) (Geobacter bemidjiensis).